Consider the following 424-residue polypeptide: GTPase Obg (424 aa).

The Obg domain maps to 1 to 158; it reads MFIDTAKILV…RMINLEIKLL (158 aa). One can recognise an OBG-type G domain in the interval 159-331; the sequence is ADVGLIGFPN…LIKEVTRQLS (173 aa). GTP-binding positions include 165–172, 190–194, 212–215, 282–285, and 312–314; these read GFPNVGKS, FTTLK, DIPG, NKID, and SAA. Residues Ser-172 and Thr-192 each contribute to the Mg(2+) site. In terms of domain architecture, OCT spans 345-424; the sequence is RFMPEEKRFT…LNDFEFDFLL (80 aa).

Belongs to the TRAFAC class OBG-HflX-like GTPase superfamily. OBG GTPase family. In terms of assembly, monomer. The cofactor is Mg(2+).

The protein resides in the cytoplasm. Its function is as follows. An essential GTPase which binds GTP, GDP and possibly (p)ppGpp with moderate affinity, with high nucleotide exchange rates and a fairly low GTP hydrolysis rate. Plays a role in control of the cell cycle, stress response, ribosome biogenesis and in those bacteria that undergo differentiation, in morphogenesis control. The sequence is that of GTPase Obg from Clostridium novyi (strain NT).